The chain runs to 200 residues: Methylthioribulose-1-phosphate dehydratase (200 aa).

2 residues coordinate Zn(2+): His-90 and His-92.

It belongs to the aldolase class II family. MtnB subfamily. Requires Zn(2+) as cofactor.

The enzyme catalyses 5-(methylsulfanyl)-D-ribulose 1-phosphate = 5-methylsulfanyl-2,3-dioxopentyl phosphate + H2O. Its pathway is amino-acid biosynthesis; L-methionine biosynthesis via salvage pathway; L-methionine from S-methyl-5-thio-alpha-D-ribose 1-phosphate: step 2/6. Catalyzes the dehydration of methylthioribulose-1-phosphate (MTRu-1-P) into 2,3-diketo-5-methylthiopentyl-1-phosphate (DK-MTP-1-P). The sequence is that of Methylthioribulose-1-phosphate dehydratase from Sodalis glossinidius (strain morsitans).